The sequence spans 96 residues: Co-chaperonin GroES (96 aa).

The protein belongs to the GroES chaperonin family. As to quaternary structure, heptamer of 7 subunits arranged in a ring. Interacts with the chaperonin GroEL.

The protein localises to the cytoplasm. Functionally, together with the chaperonin GroEL, plays an essential role in assisting protein folding. The GroEL-GroES system forms a nano-cage that allows encapsulation of the non-native substrate proteins and provides a physical environment optimized to promote and accelerate protein folding. GroES binds to the apical surface of the GroEL ring, thereby capping the opening of the GroEL channel. This chain is Co-chaperonin GroES, found in Histophilus somni (strain 129Pt) (Haemophilus somnus).